The sequence spans 666 residues: ESX-1 secretion-associated protein EspI (666 aa).

Residues 1 to 15 (MAADYDKLFRPHEGM) show a composition bias toward basic and acidic residues. The tract at residues 1–378 (MAADYDKLFR…ATKPPKVVSQ (378 aa)) is disordered. Residues 22 to 31 (AAQPFFDPSA) are compositionally biased toward low complexity. Composition is skewed to pro residues over residues 64–80 (APPP…PTPM), 87–144 (PPSP…PAPT), and 188–205 (PAPP…PAPS). The span at 222-231 (HSRRARRGHR) shows a compositional bias: basic residues. The segment covering 284–297 (PTRPAPTEPPPSPS) has biased composition (pro residues). A compositionally biased stretch (basic residues) spans 357–371 (PKVKKVKPQKPKATK). 424-431 (LKGGAGKT) serves as a coordination point for ATP.

Its function is as follows. Required to repress ESX-1-mediated secretion under low ATP conditions. This function requires the ATP-binding motif. This chain is ESX-1 secretion-associated protein EspI, found in Mycobacterium tuberculosis (strain CDC 1551 / Oshkosh).